A 225-amino-acid polypeptide reads, in one-letter code: MSLQPTATEVGTMYDQYTSLLTDVMAGFIHVGYWDDPEREDTIEVATERLTREIGERLSSVRGQRILDVGCGTGKSAVQIATAHDVHITGITVSNHQIELAQSQYESNTKAGQVNFLFANAMDLPFADASFDGAYAIESLVHMDDRRTALTNIARVLRPGSRLAIADLFLDAGCPNPEVLARFHELFQVPPMPSGDDLKALLHQTGFKVIEFTDIRDTSGLSANF.

Residues Q97 and H142 each contribute to the S-adenosyl-L-methionine site.

It belongs to the methyltransferase superfamily.

It catalyses the reaction desmethylrestrictinol + S-adenosyl-L-methionine = restrictinol + S-adenosyl-L-homocysteine + H(+). Its pathway is antifungal biosynthesis. In terms of biological role, O-methyltransferase; part of the gene cluster that mediates the biosynthesis of the tetrahydropyranyl antifungal agent restricticin that acts as an inhibitor of CYP51 and blocks the ergosterol biosynthesis. Within the pathway, rstn1 uses S-adenosylmethionine to methylate position C4 of desmethylrestrictinol to produce restrictinol. The highly reducing polyketide synthase rstn3, the short chain dehydrogenase rstn4, the cyclase rstn5, the FAD-dependent monooxygenase rstn6 and the enoylreductase rstn7 are required to generate the first stable intermediate desmethylrestrictinol. Rstn3 with rstn7 biosynthesize the first polyketide chain intermediate that is reduced by rstn4, followed by epoxidation by rstn6 before 6-endo cyclization via epoxide opening by rstn5 leads to desmethylrestrictinol. The methyltransferase rstn1 then catalyzes the C4 O-methylation of desmethylrestrictinol to produce restrictinol, and the nonribosomal peptide synthetase rstn8 catalyzes the C3 esterification of restrictinol with glycine that leads to restricticin. The protein is O-methyltransferase rstn1 of Aspergillus nomiae NRRL (strain ATCC 15546 / NRRL 13137 / CBS 260.88 / M93).